The following is a 102-amino-acid chain: UPF0751 protein DSY4013 (102 aa).

It belongs to the UPF0751 family.

The polypeptide is UPF0751 protein DSY4013 (Desulfitobacterium hafniense (strain Y51)).